Consider the following 273-residue polypeptide: Rho GTPase-activating protein gacB (273 aa).

In terms of domain architecture, Rho-GAP spans 1 to 192; it reads MTDQTLRLEN…YLISHFNEIF (192 aa).

The protein resides in the cytoplasm. Rho GTPase-activating protein involved in the signal transduction pathway. The chain is Rho GTPase-activating protein gacB (gacB) from Dictyostelium discoideum (Social amoeba).